The chain runs to 86 residues: Small ribosomal subunit protein bS20 (86 aa).

A compositionally biased stretch (basic and acidic residues) spans 1–16 (MANIKSQEKRIRTNER). Positions 1–25 (MANIKSQEKRIRTNERRRLRNQSVK) are disordered.

Belongs to the bacterial ribosomal protein bS20 family.

Its function is as follows. Binds directly to 16S ribosomal RNA. The polypeptide is Small ribosomal subunit protein bS20 (Mycobacterium sp. (strain JLS)).